A 323-amino-acid polypeptide reads, in one-letter code: MYHNSSQKRHWTFSSEEQLARLRADANRKFRCKAVANGKVLPNDPVFLEPHEEMTLCKYYEKRLLEFCSVFKPAMPRSVVGTACMYFKRFYLNNSVMEYHPRIIMLTCAFLACKVDEFNVSSPQFVGNLRESPLGQEKALEQILEYELLLIQQLNFHLIVHNPYRPFEGFLIDLKTRYPILENPEILRKTADDFLNRIALTDAYLLYTPSQIALTAILSSASRAGITMESYLSESLMLKENRTCLSQLLDIMKSMRNLVKKYEPPRSEEVAVLKQKLERCHSAELALNVITKKRKGYEDDDYVSKKSKHEEEEWTDDDLVESL.

At Ser-5 the chain carries Phosphoserine; by CDK8. The residue at position 132 (Ser-132) is a Phosphoserine. Positions 297–323 are disordered; sequence YEDDDYVSKKSKHEEEEWTDDDLVESL. The segment covering 302 to 311 has biased composition (basic and acidic residues); the sequence is YVSKKSKHEE. Ser-304 is modified (phosphoserine; by CDK8). Residues 312 to 323 are compositionally biased toward acidic residues; the sequence is EEWTDDDLVESL. Thr-315 carries the phosphothreonine modification. Ser-322 bears the Phosphoserine mark.

This sequence belongs to the cyclin family. Cyclin C subfamily. Associates primarily with CDK7 and MAT1 to form the CAK complex. CAK can further associate with the core-TFIIH to form the TFIIH basal transcription factor.

The protein resides in the nucleus. In terms of biological role, regulates CDK7, the catalytic subunit of the CDK-activating kinase (CAK) enzymatic complex. CAK activates the cyclin-associated kinases CDK1, CDK2, CDK4 and CDK6 by threonine phosphorylation. CAK complexed to the core-TFIIH basal transcription factor activates RNA polymerase II by serine phosphorylation of the repetitive C-terminal domain (CTD) of its large subunit (POLR2A), allowing its escape from the promoter and elongation of the transcripts. Involved in cell cycle control and in RNA transcription by RNA polymerase II. Its expression and activity are constant throughout the cell cycle. The sequence is that of Cyclin-H (CCNH) from Homo sapiens (Human).